The sequence spans 29 residues: ATP synthase subunit 9, mitochondrial (29 aa).

This sequence belongs to the ATPase C chain family. F-type ATPases have 2 components, CF(1) - the catalytic core - and CF(0) - the membrane proton channel. CF(1) has five subunits: alpha(3), beta(3), gamma(1), delta(1), epsilon(1). CF(0) has three main subunits: a, b and c.

The protein localises to the mitochondrion membrane. Mitochondrial membrane ATP synthase (F(1)F(0) ATP synthase or Complex V) produces ATP from ADP in the presence of a proton gradient across the membrane which is generated by electron transport complexes of the respiratory chain. F-type ATPases consist of two structural domains, F(1) - containing the extramembraneous catalytic core and F(0) - containing the membrane proton channel, linked together by a central stalk and a peripheral stalk. During catalysis, ATP synthesis in the catalytic domain of F(1) is coupled via a rotary mechanism of the central stalk subunits to proton translocation. Part of the complex F(0) domain. A homomeric c-ring of probably 10 subunits is part of the complex rotary element. This chain is ATP synthase subunit 9, mitochondrial (ATP9), found in Wickerhamomyces pijperi (Yeast).